Reading from the N-terminus, the 426-residue chain is Anaerobic glycerol-3-phosphate dehydrogenase subunit B (426 aa).

Belongs to the anaerobic G-3-P dehydrogenase subunit B family. As to quaternary structure, composed of a catalytic GlpA/B dimer and of membrane bound GlpC. FMN serves as cofactor.

The catalysed reaction is a quinone + sn-glycerol 3-phosphate = dihydroxyacetone phosphate + a quinol. It participates in polyol metabolism; glycerol degradation via glycerol kinase pathway; glycerone phosphate from sn-glycerol 3-phosphate (anaerobic route): step 1/1. Conversion of glycerol 3-phosphate to dihydroxyacetone. Uses fumarate or nitrate as electron acceptor. This chain is Anaerobic glycerol-3-phosphate dehydrogenase subunit B, found in Haemophilus ducreyi (strain 35000HP / ATCC 700724).